Reading from the N-terminus, the 216-residue chain is Probable GTP-binding protein EngB (216 aa).

The EngB-type G domain maps to 27-201; the sequence is EGIEVAFAGR…REKLDTWFSE (175 aa). GTP-binding positions include 35–42, 62–66, 80–83, 147–150, and 180–182; these read GRSNAGKS, GRTQL, DLPG, TKAD, and FSS. Residues S42 and T64 each contribute to the Mg(2+) site.

It belongs to the TRAFAC class TrmE-Era-EngA-EngB-Septin-like GTPase superfamily. EngB GTPase family. Mg(2+) is required as a cofactor.

Functionally, necessary for normal cell division and for the maintenance of normal septation. The protein is Probable GTP-binding protein EngB of Yersinia pseudotuberculosis serotype O:1b (strain IP 31758).